The following is a 455-amino-acid chain: Probable 1,4-beta-D-glucan cellobiohydrolase A (455 aa).

Positions 1-17 (MHQRALLFSAFWTAVQA) are cleaved as a signal peptide. N-linked (GlcNAc...) asparagine glycosylation is present at Asn81. Glu227 (nucleophile) is an active-site residue. The Proton donor role is filled by Glu232. Asn285 is a glycosylation site (N-linked (GlcNAc...) asparagine).

It belongs to the glycosyl hydrolase 7 (cellulase C) family.

Its subcellular location is the secreted. The enzyme catalyses Hydrolysis of (1-&gt;4)-beta-D-glucosidic linkages in cellulose and cellotetraose, releasing cellobiose from the non-reducing ends of the chains.. Its function is as follows. The biological conversion of cellulose to glucose generally requires three types of hydrolytic enzymes: (1) Endoglucanases which cut internal beta-1,4-glucosidic bonds; (2) Exocellobiohydrolases that cut the disaccharide cellobiose from the non-reducing end of the cellulose polymer chain; (3) Beta-1,4-glucosidases which hydrolyze the cellobiose and other short cello-oligosaccharides to glucose. The polypeptide is Probable 1,4-beta-D-glucan cellobiohydrolase A (cbhA) (Aspergillus flavus (strain ATCC 200026 / FGSC A1120 / IAM 13836 / NRRL 3357 / JCM 12722 / SRRC 167)).